Here is a 75-residue protein sequence, read N- to C-terminus: Putative sulfur carrier protein MJ0990 (75 aa).

The Cysteine persulfide intermediate role is filled by cysteine 15.

It belongs to the sulfur carrier protein TusA family.

The sequence is that of Putative sulfur carrier protein MJ0990 from Methanocaldococcus jannaschii (strain ATCC 43067 / DSM 2661 / JAL-1 / JCM 10045 / NBRC 100440) (Methanococcus jannaschii).